We begin with the raw amino-acid sequence, 508 residues long: UDP-N-acetylmuramoylalanine--D-glutamate ligase (508 aa).

ATP is bound at residue 138 to 144 (GTNGKTT). A disordered region spans residues 294-314 (FDEPAPRRKKDAPPPTRAGGR).

This sequence belongs to the MurCDEF family.

It is found in the cytoplasm. The catalysed reaction is UDP-N-acetyl-alpha-D-muramoyl-L-alanine + D-glutamate + ATP = UDP-N-acetyl-alpha-D-muramoyl-L-alanyl-D-glutamate + ADP + phosphate + H(+). It functions in the pathway cell wall biogenesis; peptidoglycan biosynthesis. Cell wall formation. Catalyzes the addition of glutamate to the nucleotide precursor UDP-N-acetylmuramoyl-L-alanine (UMA). The protein is UDP-N-acetylmuramoylalanine--D-glutamate ligase of Bordetella parapertussis (strain 12822 / ATCC BAA-587 / NCTC 13253).